We begin with the raw amino-acid sequence, 255 residues long: Hydroxyacylglutathione hydrolase (255 aa).

Positions 56, 58, 60, 61, 114, 133, and 171 each coordinate Zn(2+).

Belongs to the metallo-beta-lactamase superfamily. Glyoxalase II family. As to quaternary structure, monomer. Requires Zn(2+) as cofactor.

It carries out the reaction an S-(2-hydroxyacyl)glutathione + H2O = a 2-hydroxy carboxylate + glutathione + H(+). The protein operates within secondary metabolite metabolism; methylglyoxal degradation; (R)-lactate from methylglyoxal: step 2/2. In terms of biological role, thiolesterase that catalyzes the hydrolysis of S-D-lactoyl-glutathione to form glutathione and D-lactic acid. This is Hydroxyacylglutathione hydrolase from Cereibacter sphaeroides (strain ATCC 17023 / DSM 158 / JCM 6121 / CCUG 31486 / LMG 2827 / NBRC 12203 / NCIMB 8253 / ATH 2.4.1.) (Rhodobacter sphaeroides).